The sequence spans 270 residues: tRNA pseudouridine synthase A (270 aa).

D60 acts as the Nucleophile in catalysis. The interval 107–111 is RNA binding; that stretch reads FHARF. Residue Y118 participates in substrate binding. An interaction with tRNA region spans residues 168-172; the sequence is QCQSR.

The protein belongs to the tRNA pseudouridine synthase TruA family. In terms of assembly, homodimer.

The catalysed reaction is uridine(38/39/40) in tRNA = pseudouridine(38/39/40) in tRNA. Functionally, formation of pseudouridine at positions 38, 39 and 40 in the anticodon stem and loop of transfer RNAs. This is tRNA pseudouridine synthase A from Escherichia coli O139:H28 (strain E24377A / ETEC).